We begin with the raw amino-acid sequence, 130 residues long: MAENQYYGTGRRKSSAARVFIKPGSGNIVINQRSLEQYFGRETARMVVRQPLELVDMVGKFDLYITVKGGGISGQAGAIRHGITRALMEYDESLRGELRKAGFVTRDARQVERKKVGLRKARRRPQFSKR.

Belongs to the universal ribosomal protein uS9 family.

This chain is Small ribosomal subunit protein uS9, found in Pectobacterium atrosepticum (strain SCRI 1043 / ATCC BAA-672) (Erwinia carotovora subsp. atroseptica).